Here is a 523-residue protein sequence, read N- to C-terminus: MAAALQVLPCLLRAPSRPLLWGPPVARMTSGMALAEQARQLFDSAVGAVQPGPMLQRTLSLDPSGRQLKVRDRTFQLRENLYLVGFGKAVLGMAAAAEELLAQHLVQGVISVPKGIRAAMEHAGKKEMLLKPHSRVQVFEGAEDNLPDRDALRAALTIQQLAEGLTADDLLLVLISGGGSALLPAPIPPVTLEEKQMLTKLLAARGATIQELNTIRKALSQLKGGGLAQAAYPAQVISLILSDVIGDPLEVIASGPTVASAHSVQDCLHILNHYGLRAALPRSVKTVLSRADSDPHGPHTCGHVLNVIIGSNSLALAEAQRQAEVLGYHAMVLSTAMQGDVKRVARFYGLLARVAAAHLTPSLAERPLEEEAELHQLAAELQLPDLQLEEALEAVAKAKGPVCLLAGGEPTVQLQGSGKGGRNQELALHVGVELGRQPLGPIDVLFLSGGTDGQDGPTKVAGAWVMSDLISQASAESLDIATSLTNNDSYTFFCRFRGGTHLLHTGLTGTNVMDVHLLILHPQ.

At S60 the chain carries Phosphoserine. K200 carries the post-translational modification N6-acetyllysine.

The protein belongs to the glycerate kinase type-2 family. Expressed in the hippocampus, callus, brain, cerebellum, renal cortex interstitial cells, epithelium of interlobular bile duct and skeletal muscle.

Its subcellular location is the cytoplasm. It catalyses the reaction (R)-glycerate + ATP = (2R)-3-phosphoglycerate + ADP + H(+). This Mus musculus (Mouse) protein is Glycerate kinase (Glyctk).